Reading from the N-terminus, the 57-residue chain is Small ribosomal subunit protein eS27 (57 aa).

The Zn(2+) site is built by C10, C13, C29, and C32. Residues 10–32 (CPDCENEQTVFGKASTEVACAVC) form a C4-type zinc finger.

It belongs to the eukaryotic ribosomal protein eS27 family. Part of the 30S ribosomal subunit. It depends on Zn(2+) as a cofactor.

The sequence is that of Small ribosomal subunit protein eS27 from Halobacterium salinarum (strain ATCC 29341 / DSM 671 / R1).